The chain runs to 383 residues: Opsin Rh4 (383 aa).

Residues 1–57 (MDIAGSLCNASEGPVLRPEARVSGNGDLQFLGWNVPPDQIQHIPEHWLTQLEPPASM) lie on the Extracellular side of the membrane. Residue N9 is glycosylated (N-linked (GlcNAc...) asparagine). The helical transmembrane segment at 58–82 (HYMLGVFYIFLFCASTVGNGMVIWI) threads the bilayer. Residues 83–94 (FSTSKALRTPSN) are Cytoplasmic-facing. The helical transmembrane segment at 95-117 (MFVLNLAVFDFIMCLKAPIFIYN) threads the bilayer. Residues 118-133 (SFHRGFALGNTGCQIF) are Extracellular-facing. C130 and C207 form a disulfide bridge. Residues 134–153 (AAIGSYSGIGAGMTNAAIGY) traverse the membrane as a helical segment. The Cytoplasmic segment spans residues 154 to 171 (DRLNVITKPMNRNMTFTK). A helical transmembrane segment spans residues 172 to 196 (AIIMNVIIWLYCTPWVVLPLTQFWD). Residues 197 to 220 (RFVPEGYLTSCTFDYLTDNFDTRL) are Extracellular-facing. A helical transmembrane segment spans residues 221-248 (FVGTIFFFSFVCPTLMIIYYYSQIVGHV). Residues 249-284 (FSHEKALREQAKKMNVESLRSNVDKSKDTAEIRIAK) lie on the Cytoplasmic side of the membrane. Residues 285–308 (AAITICFLFFVSWTPYGVMSLIGA) form a helical membrane-spanning segment. The Extracellular portion of the chain corresponds to 309–316 (FGDKSLLT). A helical transmembrane segment spans residues 317–341 (PGATMIPACTCKLVACIDPFVYAIS). At K328 the chain carries N6-(retinylidene)lysine. The Cytoplasmic portion of the chain corresponds to 342 to 383 (HPRYRMELQKRCPWLAIDEKAPESSSAASTTTTQEQQQTTAA). A disordered region spans residues 361–383 (KAPESSSAASTTTTQEQQQTTAA). Over residues 364 to 383 (ESSSAASTTTTQEQQQTTAA) the composition is skewed to low complexity.

Belongs to the G-protein coupled receptor 1 family. Opsin subfamily. In terms of processing, phosphorylated on some or all of the serine and threonine residues present in the C-terminal region.

It is found in the membrane. In terms of biological role, visual pigments are the light-absorbing molecules that mediate vision. They consist of an apoprotein, opsin, covalently linked to cis-retinal. The chain is Opsin Rh4 (Rh4) from Drosophila virilis (Fruit fly).